The following is a 257-amino-acid chain: NH(3)-dependent NAD(+) synthetase (257 aa).

28–35 (GISGGVDS) contributes to the ATP binding site. Residue D34 participates in Mg(2+) binding. R109 lines the deamido-NAD(+) pocket. ATP is bound at residue T129. E134 contacts Mg(2+). Deamido-NAD(+)-binding residues include K142 and D149. Residues K158 and S180 each coordinate ATP. 240–241 (HK) is a binding site for deamido-NAD(+).

The protein belongs to the NAD synthetase family. In terms of assembly, homodimer.

The enzyme catalyses deamido-NAD(+) + NH4(+) + ATP = AMP + diphosphate + NAD(+) + H(+). It participates in cofactor biosynthesis; NAD(+) biosynthesis; NAD(+) from deamido-NAD(+) (ammonia route): step 1/1. Functionally, catalyzes the ATP-dependent amidation of deamido-NAD to form NAD. Uses ammonia as a nitrogen source. This is NH(3)-dependent NAD(+) synthetase from Pyrococcus furiosus (strain ATCC 43587 / DSM 3638 / JCM 8422 / Vc1).